Reading from the N-terminus, the 93-residue chain is DNA-binding protein Fis (93 aa).

The H-T-H motif DNA-binding region spans 74 to 93 (QTRAAQMMGINRGTLRKKLK).

It belongs to the transcriptional regulatory Fis family. As to quaternary structure, homodimer.

Activates ribosomal RNA transcription. Plays a direct role in upstream activation of rRNA promoters. This chain is DNA-binding protein Fis, found in Proteus vulgaris.